Reading from the N-terminus, the 1137-residue chain is Nonsense-mediated mRNA decay factor SMG7 (1137 aa).

N-acetylserine is present on S2. TPR repeat units follow at residues 152–185 (QHCL…VPSN) and 187–219 (QPYN…KFPF). A Phosphoserine modification is found at S520. The span at 620-631 (ELRKTPVSEARK) shows a compositional bias: basic and acidic residues. 6 disordered regions span residues 620 to 646 (ELRK…NSQF), 696 to 794 (LQPT…YQQA), 890 to 911 (IDRR…VPRM), 988 to 1055 (PSLP…AMGG), 1069 to 1089 (SSWH…PSME), and 1104 to 1137 (SSSM…NPPH). T624 is subject to Phosphothreonine. 2 stretches are compositionally biased toward polar residues: residues 633 to 646 (PVTQ…NSQF) and 696 to 722 (LQPT…SQQR). Over residues 723–770 (PSGPGPMNQGPQQSQPPSQQPLTSLPAQPTAQSTSQLQVQALTQQQQS) the composition is skewed to low complexity. Residues S781 and S897 each carry the phosphoserine modification. A compositionally biased stretch (polar residues) spans 988 to 998 (PSLPASSDHST). Positions 999 to 1025 (PASQSPHSSNPSSLPSSPPTHNHNSVP) are enriched in low complexity. A compositionally biased stretch (basic and acidic residues) spans 1036-1050 (DNRDRRTADRWKTDK). Over residues 1069 to 1081 (SSWHQASTPSGTW) the composition is skewed to polar residues. The segment covering 1117-1131 (QLLMQQKQKQQRGQG) has biased composition (low complexity).

Part of a complex that contains SMG5, SMG7, PPP2CA, a short isoform of UPF3A (isoform UPF3AS, but not isoform UPF3AL) and phosphorylated UPF1. Interacts with DHX34; the interaction is RNA-independent.

The protein resides in the cytoplasm. It is found in the nucleus. Functionally, plays a role in nonsense-mediated mRNA decay. Recruits UPF1 to cytoplasmic mRNA decay bodies. Together with SMG5 is thought to provide a link to the mRNA degradation machinery involving exonucleolytic pathways, and to serve as an adapter for UPF1 to protein phosphatase 2A (PP2A), thereby triggering UPF1 dephosphorylation. The chain is Nonsense-mediated mRNA decay factor SMG7 from Homo sapiens (Human).